We begin with the raw amino-acid sequence, 199 residues long: Chaperone protein TorD (199 aa).

Belongs to the TorD/DmsD family. TorD subfamily.

Its subcellular location is the cytoplasm. Its function is as follows. Involved in the biogenesis of TorA. Acts on TorA before the insertion of the molybdenum cofactor and, as a result, probably favors a conformation of the apoenzyme that is competent for acquiring the cofactor. The sequence is that of Chaperone protein TorD from Escherichia coli O127:H6 (strain E2348/69 / EPEC).